We begin with the raw amino-acid sequence, 140 residues long: Pro-variola growth factor (140 aa).

The signal sequence occupies residues 1 to 18; the sequence is MSMKYLMLLFAAMIIRSF. The Extracellular segment spans residues 19–100; sequence ANSGNAIETT…SEKPNTTTSY (82 aa). Asn-34 carries an N-linked (GlcNAc...) asparagine; by host glycan. The EGF-like domain maps to 41 to 81; that stretch reads AIRLCGPEGDRYCFHGICIHARDIDGMYCRCSHGYTGIRCQ. 3 disulfides stabilise this stretch: Cys-45-Cys-58, Cys-53-Cys-69, and Cys-71-Cys-80. An N-linked (GlcNAc...) asparagine; by host glycan is attached at Asn-95. The chain crosses the membrane as a helical span at residues 101 to 121; that stretch reads IPSPGIVLVLLVSIIVCCLLF. The Cytoplasmic segment spans residues 122-140; that stretch reads VYRFTRRTNKLPLQDMVVP.

It belongs to the orthopoxvirus OPG019 family. As to quaternary structure, variola growth factor interacts with host EGFR and promotes EGFR dimerization.

Its subcellular location is the host membrane. It localises to the secreted. Functionally, stimulates cellular proliferation (hyperplasia)and mobility around infected cells to promote rapid and efficient spread of infection. This effect is beneficial for virus replication in vivo, because poxviruses replicate possibly better in proliferating cells than in quiescent cells. Acts by binding host EGFR, inducing its dimerization, autophosphorylation and leading to activation of several cellular pathways regulating cell proliferation or cell survival. The activation by host EGFR of mitogen activated protein kinases (MAPK) and extracellular-signal regulated kinases (ERK) are essential for the positive effect of vaccinia growth factor on poxvirus virulence in vivo. The chain is Pro-variola growth factor (OPG019) from Variola virus (isolate Human/India/Ind3/1967) (VARV).